Here is a 265-residue protein sequence, read N- to C-terminus: HUWE1-associated protein modifying stress responses (265 aa).

3 disordered regions span residues 1–22 (MEEK…HWFS), 140–173 (GKAP…SVET), and 194–219 (ISMR…RRNG). Over residues 147–172 (SSRAPPRLAMVSPSRSTPSETSSSVE) the composition is skewed to low complexity.

Belongs to the HAPSTR1 family. In terms of assembly, oligomer.

It is found in the nucleus. The protein localises to the cytoplasm. Functionally, acts as a central player within a network of stress response pathways promoting cellular adaptability. Functions as a negative regulator of TP53/P53 in the cellular response to telomere erosion and probably also DNA damage. In Danio rerio (Zebrafish), this protein is HUWE1-associated protein modifying stress responses.